The chain runs to 950 residues: Protocadherin alpha-9 (950 aa).

A signal peptide spans 1–29 (MLYSSRGDPEGQPLLLSLLILAMWVVGSG). Cadherin domains are found at residues 30 to 133 (QLHY…PPVF), 134 to 242 (PATQ…APVF), 243 to 350 (DRTL…APQL), 351 to 455 (TIKT…APAF), 456 to 565 (AQPE…APAL), and 588 to 678 (GVVV…APKS). At 30-697 (QLHYSVPEEA…GPEVTLVDVN (668 aa)) the chain is on the extracellular side. Residues N254 and N265 are each glycosylated (N-linked (GlcNAc...) asparagine). N548 carries an N-linked (GlcNAc...) asparagine glycan. A helical membrane pass occupies residues 698–718 (VYLIIAICAVSSLLVLTLLLY). Over 719-950 (TVLRCSAMPT…GNSTTDNSDQ (232 aa)) the chain is Cytoplasmic. A PXXP 1 repeat occupies 734 to 737 (PGKP). The tract at residues 734 to 894 (PGKPTLVCSS…PDKFIIPGSP (161 aa)) is 5 X 4 AA repeats of P-X-X-P. Disordered regions lie at residues 759–808 (CSGE…DWRY) and 827–950 (ILRA…NSDQ). Polar residues predominate over residues 789-798 (PSASSDSSGK). 4 PXXP repeats span residues 799–802 (PRQP), 832–835 (PGGP), 873–876 (PGNP), and 891–894 (PGSP). Over residues 909–923 (DKSDFITFGKKEETK) the composition is skewed to basic and acidic residues.

It is found in the cell membrane. Its function is as follows. Potential calcium-dependent cell-adhesion protein. May be involved in the establishment and maintenance of specific neuronal connections in the brain. The sequence is that of Protocadherin alpha-9 (PCDHA9) from Pan troglodytes (Chimpanzee).